The primary structure comprises 188 residues: Elongation factor P-like protein (188 aa).

This sequence belongs to the elongation factor P family.

The chain is Elongation factor P-like protein from Vibrio vulnificus (strain CMCP6).